Consider the following 492-residue polypeptide: MKRSALILSFLPLVFGCDNPKSPGHSCASVYSVSSAAASSFCATFTASTVTATTGVPEALLSNCDYKTKHLSSACSCLGTAAVPTVATPSSVSSVYITSATATPTSFTFKTSTAHIVKVAKAATSSTAVVTTPVSVPTASSSFTGNGGTTCTVTEYAAISSAVASCSNILLSDIYAPPSSTIDLQGLQTGAAVIFAGKTTFGDTADSDFDPIVVSGTSVTITGVEGHVIDGNGAAYWDGQGSNGGSDKPDHFFVVKDMYNSRIENLYIQNWPVHCFEIESTEHLTVSGLTLNNSAGDAANSKSDGDPAAHNSDGFDIKESSYFTLENTWVHNQDDCVAVTSGTDIVVDGMYCYGGHGLSIGSIGGKSDNTVNGVTFSNSQVISSQNGCRIKTNSGETGEVYNIRYENITLSDISDYGIDVQQDYLNGGPTGEPTNGVTIANVTFVDVTGTMSDGKDYYILCGDDSCSNFVFDGVSITGGSGDSCNYPSTGCP.

Positions 1-16 (MKRSALILSFLPLVFG) are cleaved as a signal peptide. The cysteines at positions 151 and 166 are disulfide-linked. PbH1 repeat units lie at residues 216-238 (GTSV…AYWD), 258-280 (MYNS…EIES), 281-319 (TEHL…DIKE), and 320-341 (SSYF…AVTS). N-linked (GlcNAc...) asparagine glycosylation occurs at Asn292. Asp334 (proton donor) is an active-site residue. Cys336 and Cys352 form a disulfide bridge. Residue His356 is part of the active site. PbH1 repeat units follow at residues 371–392 (VNGV…RIKT), 400–422 (VYNI…DVQQ), and 434–478 (TNGV…SITG). Residues Asn407 and Asn441 are each glycosylated (N-linked (GlcNAc...) asparagine). Disulfide bonds link Cys461–Cys466 and Cys484–Cys491.

The protein belongs to the glycosyl hydrolase 28 family.

It localises to the secreted. The enzyme catalyses (1,4-alpha-D-galacturonosyl)n+m + H2O = (1,4-alpha-D-galacturonosyl)n + (1,4-alpha-D-galacturonosyl)m.. Its function is as follows. Involved in maceration and soft-rotting of plant tissue. Hydrolyzes the 1,4-alpha glycosidic bonds of de-esterified pectate in the smooth region of the plant cell wall. This is Probable endopolygalacturonase D (pgaD) from Aspergillus oryzae (strain ATCC 42149 / RIB 40) (Yellow koji mold).